The sequence spans 387 residues: Putative transmembrane protein At3g54730 (387 aa).

Over residues 10 to 25 (PAPPLLLPSPNPPPCA) the composition is skewed to pro residues. A disordered region spans residues 10–45 (PAPPLLLPSPNPPPCALPQDLTSLVSPSEPPDPPDP). The next 8 membrane-spanning stretches (helical) occupy residues 97 to 117 (VFPL…HPLV), 128 to 148 (GSNF…ILQF), 154 to 174 (VMIS…MILL), 186 to 206 (VLFS…VGLI), 221 to 241 (IQKL…FLEI), 292 to 312 (SWCF…YPLE), 335 to 355 (FSTI…FIFF), and 362 to 382 (PFVA…LNHF).

The protein localises to the membrane. The polypeptide is Putative transmembrane protein At3g54730 (Arabidopsis thaliana (Mouse-ear cress)).